A 129-amino-acid polypeptide reads, in one-letter code: Glycine cleavage system H protein (129 aa).

The Lipoyl-binding domain maps to 24 to 106 (IAVIGITAYA…YGDGWLIKVR (83 aa)). An N6-lipoyllysine modification is found at lysine 65.

Belongs to the GcvH family. As to quaternary structure, the glycine cleavage system is composed of four proteins: P, T, L and H. Requires (R)-lipoate as cofactor.

Functionally, the glycine cleavage system catalyzes the degradation of glycine. The H protein shuttles the methylamine group of glycine from the P protein to the T protein. The protein is Glycine cleavage system H protein of Synechococcus sp. (strain JA-3-3Ab) (Cyanobacteria bacterium Yellowstone A-Prime).